The primary structure comprises 421 residues: Probable indole-3-pyruvate monooxygenase YUCCA9 (421 aa).

29–34 is an FAD binding site; the sequence is GAGPSG. 196-201 contacts NADP(+); the sequence is GCGNSG.

Belongs to the FMO family. FAD is required as a cofactor.

The catalysed reaction is indole-3-pyruvate + NADPH + O2 + H(+) = (indol-3-yl)acetate + CO2 + NADP(+) + H2O. The protein operates within plant hormone metabolism; auxin biosynthesis. In terms of biological role, involved in auxin biosynthesis. Belongs to the set of redundant YUCCA genes probably responsible for auxin biosynthesis in roots. This is Probable indole-3-pyruvate monooxygenase YUCCA9 (YUC9) from Arabidopsis thaliana (Mouse-ear cress).